The primary structure comprises 494 residues: U3 small nucleolar RNA-associated protein 15 (494 aa).

7 WD repeats span residues 37–76, 79–118, 121–161, 164–202, 205–243, 248–287, and 289–328; these read KEYS…VKKT, RFKD…ILRA, AHQF…VQYD, GHED…PEVM, SHGE…QTPT, NHQK…VVHG, and KYSG…QTSS.

In terms of assembly, component of the ribosomal small subunit (SSU) processome.

The protein resides in the nucleus. It localises to the nucleolus. Involved in nucleolar processing of pre-18S ribosomal RNA. Required for optimal pre-ribosomal RNA transcription by RNA polymerase I together with a subset of U3 proteins required for transcription (t-UTPs). The sequence is that of U3 small nucleolar RNA-associated protein 15 (utp15) from Schizosaccharomyces pombe (strain 972 / ATCC 24843) (Fission yeast).